Reading from the N-terminus, the 576-residue chain is uncharacterized protein (576 aa).

Belongs to the FadG family.

This is an uncharacterized protein from Bacillus subtilis (strain 168).